Reading from the N-terminus, the 140-residue chain is MNIIQTLEAEQAAKLAEKRAIPDFQPGDTIIVNVKVVEGERSRVQAYEGVCIARSGGGLNESFTVRKISYGEGVERVFPVYAPLIDSIKVVRRGKVRRAKLYYLRDRRGKSARIAERQDRTADGKIKKGGKSAPAPTAAE.

Basic and acidic residues predominate over residues 113–126; sequence RIAERQDRTADGKI. The segment at 113 to 140 is disordered; the sequence is RIAERQDRTADGKIKKGGKSAPAPTAAE.

This sequence belongs to the bacterial ribosomal protein bL19 family.

In terms of biological role, this protein is located at the 30S-50S ribosomal subunit interface and may play a role in the structure and function of the aminoacyl-tRNA binding site. The chain is Large ribosomal subunit protein bL19 from Xanthobacter autotrophicus (strain ATCC BAA-1158 / Py2).